We begin with the raw amino-acid sequence, 436 residues long: F-box/LRR-repeat protein At2g40920 (436 aa).

The F-box domain occupies 48-98 (EYLLQNFDLDHVMEILMRFPLTSLTRFKCVSKQWSSLISSRYFCNLLYTTV). LRR repeat units lie at residues 276–301 (NCVV…IHLD) and 393–416 (YYNL…WFDK).

This is F-box/LRR-repeat protein At2g40920 from Arabidopsis thaliana (Mouse-ear cress).